A 695-amino-acid polypeptide reads, in one-letter code: MRRFLLLYATQRGQAKAIAEEISEKAVTYGFSADLHCISESDKYDLKTETAPLVMVVSTTGNGDPPDTARKFVKAIKDKTLPPDFLAHLRYGLLGLGDSEYTYFCNGGKVIDKRLQELGAQRFYDTGHADDCVGLELVVEPWINGLWAALEKHFLSNRGREDTSETLTMASHASRDAVTPELLHVESQVGLLKLDDSGGKAAKVLEQNAVNSNQSSTLIVDFEASLTHSVPPLSQASLNIPSLPPEYLEVHLEEALGQEESHASVSLVDPVFHVPVSKAVQLTTNDAIKTTLLIELDISKTDFSYQPGDAFNVICPNSDSEVQFLLQRLQLADRREHHVAVTIKADTRKKGAALPQHVPERCSLQFLLTWCLEIRAVPKKAFLRALADHTGDSAERRRLQELCSRQGAADYTRFVREAGACLSDLLRAFPSCQPPLGLLLEHLPKLQPRPYSCASSSLFHPGKLHFIFNIVEFLSNTTEVILRRGVCTGWLATLVESILQPYMCANHVDGKKALAPKISISPRTTNSFHLPDDPSVPIIMVGPGAGVAPFIGFLQHREKLQEQHPGGHFGATWLFFGCRHKERDYLFRDELRHFLKCGVLTHLEVSFSRDVAVGEEEGPAKYVQDSLQRHSKQVAGVLLQDSGYVYVCGDAKNMAKDVHDALVEIISRETGVEKLEAMKTLATLKEEKRYLQDIW.

The 144-residue stretch at 4 to 147 (FLLLYATQRG…VVEPWINGLW (144 aa)) folds into the Flavodoxin-like domain. Residues 10–14 (TQRGQ) and 93–124 (LLGLGDSEYTYFCNGGKVIDKRLQELGAQRFY) contribute to the FMN site. Positions 166–245 (TLTMASHASR…ASLNIPSLPP (80 aa)) are hinge. Ser171 and Ser187 each carry phosphoserine. The FAD-binding FR-type domain occupies 269–531 (DPVFHVPVSK…PRTTNSFHLP (263 aa)). Position 289 (Lys289) interacts with NADP(+). FAD is bound by residues 449 to 452 (RPYS) and 485 to 488 (GVCT). NADP(+)-binding positions include 608–609 (SR), 622–624 (YVQ), and Asp657. Residue Trp695 participates in FAD binding.

In terms of assembly, forms a multiprotein complex with MMACHC, MMADHC and MTR. The cofactor is FAD. It depends on FMN as a cofactor.

It is found in the cytoplasm. It catalyses the reaction 2 methylcob(III)alamin-[methionine synthase] + 2 S-adenosyl-L-homocysteine + NADP(+) + H(+) = 2 cob(II)alamin-[methionine synthase] + 2 S-adenosyl-L-methionine + NADPH. It carries out the reaction 2 cob(II)alamin + A + 2 H2O + 2 H(+) = 2 aquacob(III)alamin + AH2. Functionally, key enzyme in methionine and folate homeostasis responsible for the reactivation of methionine synthase (MTR/MS) activity by catalyzing the reductive methylation of MTR-bound cob(II)alamin. Cobalamin (vitamin B12) forms a complex with MTR to serve as an intermediary in methyl transfer reactions that cycles between MTR-bound methylcob(III)alamin and MTR bound-cob(I)alamin forms, and occasional oxidative escape of the cob(I)alamin intermediate during the catalytic cycle leads to the inactive cob(II)alamin species. The processing of cobalamin in the cytosol occurs in a multiprotein complex composed of at least MMACHC, MMADHC, MTRR and MTR which may contribute to shuttle safely and efficiently cobalamin towards MTR in order to produce methionine. Also necessary for the utilization of methyl groups from the folate cycle, thereby affecting transgenerational epigenetic inheritance. Also acts as a molecular chaperone for methionine synthase by stabilizing apoMTR and incorporating methylcob(III)alamin into apoMTR to form the holoenzyme. Also serves as an aquacob(III)alamin reductase by reducing aquacob(III)alamin to cob(II)alamin; this reduction leads to stimulation of the conversion of apoMTR and aquacob(III)alamin to MTR holoenzyme. The polypeptide is Methionine synthase reductase (MTRR) (Bos taurus (Bovine)).